Reading from the N-terminus, the 710-residue chain is Protein-glutamine gamma-glutamyltransferase Z (710 aa).

Residues C279, H338, and D361 contribute to the active site. Residues N401, D403, E450, and E455 each coordinate Ca(2+).

The protein belongs to the transglutaminase superfamily. Transglutaminase family. It depends on Ca(2+) as a cofactor. Widely expressed.

The catalysed reaction is L-glutaminyl-[protein] + L-lysyl-[protein] = [protein]-L-lysyl-N(6)-5-L-glutamyl-[protein] + NH4(+). Its function is as follows. Catalyzes the cross-linking of proteins and the conjugation of polyamines to proteins. This chain is Protein-glutamine gamma-glutamyltransferase Z (TGM7), found in Homo sapiens (Human).